The primary structure comprises 129 residues: DNA-directed RNA polymerase subunit omega (129 aa).

The disordered stretch occupies residues 76–100; the sequence is EVDEPEPEAVPMIASGDSSGGEDSD.

The protein belongs to the RNA polymerase subunit omega family. The RNAP catalytic core consists of 2 alpha, 1 beta, 1 beta' and 1 omega subunit. When a sigma factor is associated with the core the holoenzyme is formed, which can initiate transcription.

The catalysed reaction is RNA(n) + a ribonucleoside 5'-triphosphate = RNA(n+1) + diphosphate. Promotes RNA polymerase assembly. Latches the N- and C-terminal regions of the beta' subunit thereby facilitating its interaction with the beta and alpha subunits. The polypeptide is DNA-directed RNA polymerase subunit omega (Xanthobacter autotrophicus (strain ATCC BAA-1158 / Py2)).